The sequence spans 513 residues: Na(+)/H(+) antiporter NhaB (513 aa).

A run of 12 helical transmembrane segments spans residues 23 to 43, 52 to 72, 97 to 117, 120 to 140, 144 to 164, 202 to 222, 238 to 258, 303 to 323, 348 to 368, 391 to 411, 447 to 467, and 475 to 495; these read LALI…PFVA, IFTL…LLAI, LLLM…LFIF, LLLS…AAAF, FLDA…FYGI, LMMH…VGEP, FFLR…LTCL, AIIG…VGLI, TESL…AVII, LFYI…VGTI, ATPN…APLI, and VWMA…CVEF.

The protein belongs to the NhaB Na(+)/H(+) (TC 2.A.34) antiporter family.

Its subcellular location is the cell inner membrane. The catalysed reaction is 2 Na(+)(in) + 3 H(+)(out) = 2 Na(+)(out) + 3 H(+)(in). In terms of biological role, na(+)/H(+) antiporter that extrudes sodium in exchange for external protons. This chain is Na(+)/H(+) antiporter NhaB, found in Escherichia coli O6:H1 (strain CFT073 / ATCC 700928 / UPEC).